The sequence spans 81 residues: Protein GPR15LG (81 aa).

An N-terminal signal peptide occupies residues 1-24 (MRFLALTSLLCILLLCLSFFSAEG). Disulfide bonds link Cys-40/Cys-63 and Cys-41/Cys-60.

As to quaternary structure, interacts with SUSD2; the interaction is direct.

It localises to the secreted. Highly cationic protein that has multiple functions. Acts as a chemotactic factor that mediates lymphocytes recruitment to epithelia through binding and activation of the G-protein coupled receptor GPR15. May be a tumor suppressor; together with SUSD2 has a growth inhibitory effect on colon cancer cells which includes G1 cell cycle arrest. May regulate keratinocyte proliferation. In addition, through activation of Mas-related G protein-coupled receptors (MRGPRs) contributes to pruritogenesis by activating itch-selective sensory neurons and mast cells degranulation. In terms of biological role, has antimicrobial activity against Gram-positive bacteria, including Staphylococcus aureus and Actinomyces spec., and Mycoplasma hominis and lentivirus. The protein is Protein GPR15LG (GPR15LG) of Sus scrofa (Pig).